The following is a 123-amino-acid chain: Small ribosomal subunit protein uS12 (123 aa).

Position 89 is a 3-methylthioaspartic acid (Asp-89).

The protein belongs to the universal ribosomal protein uS12 family. Part of the 30S ribosomal subunit. Contacts proteins S8 and S17. May interact with IF1 in the 30S initiation complex.

With S4 and S5 plays an important role in translational accuracy. Its function is as follows. Interacts with and stabilizes bases of the 16S rRNA that are involved in tRNA selection in the A site and with the mRNA backbone. Located at the interface of the 30S and 50S subunits, it traverses the body of the 30S subunit contacting proteins on the other side and probably holding the rRNA structure together. The combined cluster of proteins S8, S12 and S17 appears to hold together the shoulder and platform of the 30S subunit. The chain is Small ribosomal subunit protein uS12 from Maridesulfovibrio salexigens (strain ATCC 14822 / DSM 2638 / NCIMB 8403 / VKM B-1763) (Desulfovibrio salexigens).